We begin with the raw amino-acid sequence, 642 residues long: Zinc finger protein 14 (642 aa).

In terms of domain architecture, KRAB spans 4–76 (VSFEDVAVNF…MVERLCESRK (73 aa)). The tract at residues 77-99 (GSKCGETTSQMPNVNINKETSTG) is disordered. Polar residues predominate over residues 81-99 (GETTSQMPNVNINKETSTG). The C2H2-type 1 zinc-finger motif lies at 103–125 (HECSFCGKDFMHHSSLNRHMRSH). The C2H2-type 2; degenerate zinc-finger motif lies at 141–163 (CKRKAVGKTFSYRHCVRKHERTH). Residues 169-191 (YECKQCGKAFIYYQPFQRHERIH) form a C2H2-type 3 zinc finger. A C2H2-type 4; atypical zinc finger spans residues 197–217 (YECKQCGKTFIYYQSFQKHAH). 15 consecutive C2H2-type zinc fingers follow at residues 223–245 (YECK…ERTH), 251–273 (YECK…ERTH), 279–301 (YKCK…KRTH), 307–329 (YECK…VITH), 335–357 (YKCK…ERTH), 363–385 (YECK…ERTH), 391–413 (YECK…ETTH), 419–441 (YECK…ERTH), 447–469 (YECK…ERSH), 475–497 (YECK…ERTH), 503–525 (YECK…EKIH), 531–553 (FECK…ERTH), 559–581 (YQCK…ERTH), 587–609 (YRCK…ERSH), and 615–637 (YECK…ERTH).

This sequence belongs to the krueppel C2H2-type zinc-finger protein family.

It localises to the nucleus. Its function is as follows. May be involved in transcriptional regulation. The chain is Zinc finger protein 14 (ZNF14) from Macaca fascicularis (Crab-eating macaque).